The sequence spans 357 residues: Arginine kinase (357 aa).

Residues 9-91 form the Phosphagen kinase N-terminal domain; that stretch reads KLEAGFKKLQ…FNPIIEDYHE (83 aa). 64 to 66 is a binding site for L-arginine; it reads GVG. A Phosphagen kinase C-terminal domain is found at 119-356; that stretch reads YVVSTHVRCG…LEMIKMEEAA (238 aa). ATP-binding positions include 122 to 126 and H185; that span reads STHVR. L-arginine is bound at residue E225. ATP is bound at residue R229. C271 is an L-arginine binding site. ATP contacts are provided by residues 280–284 and 309–314; these read RASVH and RGTRGE.

Belongs to the ATP:guanido phosphotransferase family.

It carries out the reaction L-arginine + ATP = N(omega)-phospho-L-arginine + ADP + H(+). Functionally, catalyzes the reversible transfer of high energy ATP gamma-phosphate group to L-arginine. The chain is Arginine kinase from Polybetes pythagoricus (South American huntsman spider).